A 102-amino-acid chain; its full sequence is Large ribosomal subunit protein uL24 (102 aa).

The protein belongs to the universal ribosomal protein uL24 family. Part of the 50S ribosomal subunit.

Its function is as follows. One of two assembly initiator proteins, it binds directly to the 5'-end of the 23S rRNA, where it nucleates assembly of the 50S subunit. In terms of biological role, one of the proteins that surrounds the polypeptide exit tunnel on the outside of the subunit. This is Large ribosomal subunit protein uL24 from Agrobacterium fabrum (strain C58 / ATCC 33970) (Agrobacterium tumefaciens (strain C58)).